Consider the following 426-residue polypeptide: Vacuole membrane protein hfl11 (426 aa).

5 consecutive transmembrane segments (helical) span residues 39 to 59, 73 to 93, 133 to 153, 172 to 192, and 223 to 243; these read SVVR…LSVY, IYEA…LGGE, GILQ…LTKV, IGLV…TFWV, and VLSI…YSLL. Ser364 is subject to Phosphoserine. The ATG8-interacting region stretch occupies residues 386 to 409; it reads LQFEIDDEMEPLYNQAKQMRYGDY.

The protein belongs to the TMEM184 family. Interacts with atg8.

Its subcellular location is the vacuole membrane. In terms of biological role, vacuole membrane protein that recruits ATG8 to facilitate the degradation of vacuolar integral membrane proteins during early-stationary vacuole turnover (EVT) when cells enter stationary phase. This is Vacuole membrane protein hfl11 from Schizosaccharomyces pombe (strain 972 / ATCC 24843) (Fission yeast).